A 601-amino-acid chain; its full sequence is UvrABC system protein C (601 aa).

Residues 15–94 (LQPGVYLFKN…IKSYKPRYNI (80 aa)) form the GIY-YIG domain. Residues 202-237 (QEIVREKEKEMAMAARSLEFEKAARLRDQIQSLRQL) enclose the UVR domain.

It belongs to the UvrC family. Interacts with UvrB in an incision complex.

The protein resides in the cytoplasm. Functionally, the UvrABC repair system catalyzes the recognition and processing of DNA lesions. UvrC both incises the 5' and 3' sides of the lesion. The N-terminal half is responsible for the 3' incision and the C-terminal half is responsible for the 5' incision. The protein is UvrABC system protein C of Syntrophomonas wolfei subsp. wolfei (strain DSM 2245B / Goettingen).